The sequence spans 372 residues: Tyrosine--tRNA ligase 1 (372 aa).

L-tyrosine contacts are provided by tyrosine 37, tyrosine 169, glutamine 173, aspartate 176, and glutamine 191. Residues lysine 246–serine 250 carry the 'KMSKS' region motif. Lysine 249 contacts ATP.

Belongs to the class-I aminoacyl-tRNA synthetase family. TyrS type 4 subfamily. Homodimer.

The protein localises to the cytoplasm. The enzyme catalyses tRNA(Tyr) + L-tyrosine + ATP = L-tyrosyl-tRNA(Tyr) + AMP + diphosphate + H(+). In terms of biological role, catalyzes the attachment of tyrosine to tRNA(Tyr) in a two-step reaction: tyrosine is first activated by ATP to form Tyr-AMP and then transferred to the acceptor end of tRNA(Tyr). The sequence is that of Tyrosine--tRNA ligase 1 from Pyrobaculum aerophilum (strain ATCC 51768 / DSM 7523 / JCM 9630 / CIP 104966 / NBRC 100827 / IM2).